The following is a 148-amino-acid chain: Hemoglobin subunit beta (148 aa).

In terms of domain architecture, Globin spans 3-148 (DWTDAERSAI…VVSALGRQYH (146 aa)). Heme b-binding residues include His-64 and His-93.

The protein belongs to the globin family. As to quaternary structure, heterotetramer of two alpha chains and two beta chains. Red blood cells.

Involved in oxygen transport from gills to the various peripheral tissues. This Oncorhynchus nerka (Sockeye salmon) protein is Hemoglobin subunit beta (hbb).